Consider the following 545-residue polypeptide: Capsular polysaccharide phosphotransferase SacB (545 aa).

The protein belongs to the stealth family.

May be the polymerase that links individual UDP-N-acetyl-D-mannosamine monomers. In serotype A the capsule is composed of repeated units of (alpha 1-6)-linked N-acetyl-D-mannosamine-1-phosphate. In Neisseria meningitidis serogroup A, this protein is Capsular polysaccharide phosphotransferase SacB (sacB).